The following is an 876-amino-acid chain: Leucine--tRNA ligase (876 aa).

The 'HIGH' region motif lies at 43–53; the sequence is PYPSGRIHMGH. A 'KMSKS' region motif is present at residues 632-636; the sequence is KMSKS. Lys-635 is an ATP binding site.

It belongs to the class-I aminoacyl-tRNA synthetase family.

The protein localises to the cytoplasm. It catalyses the reaction tRNA(Leu) + L-leucine + ATP = L-leucyl-tRNA(Leu) + AMP + diphosphate. This is Leucine--tRNA ligase from Rhodopseudomonas palustris (strain TIE-1).